Here is a 207-residue protein sequence, read N- to C-terminus: Ras-related protein Rab7 (207 aa).

GTP-binding positions include 15-22, 34-40, 63-67, 125-128, and 156-157; these read GDSSVGKT, SNQYKAT, DTAGQ, NKVD, and AK. Residues 37-45 carry the Effector region motif; sequence YKATIGADF. Residues cysteine 205 and cysteine 207 are each lipidated (S-geranylgeranyl cysteine).

Belongs to the small GTPase superfamily. Rab family. As to expression, expressed in eye (at protein level).

Its subcellular location is the early endosome membrane. It is found in the late endosome membrane. The protein localises to the lysosome membrane. The protein resides in the cytoplasmic vesicle. It localises to the autophagosome membrane. Its subcellular location is the autolysosome membrane. It is found in the presynapse. The protein localises to the perikaryon. The catalysed reaction is GTP + H2O = GDP + phosphate + H(+). Its function is as follows. Small GTPase which cycles between active GTP-bound and inactive GDP-bound states. In its active state, binds to a variety of effector proteins playing a key role in the regulation of endo-lysosomal trafficking. Involved in microtubule minus and plus end-directed endosomal migration and positioning, and endosome-lysosome transport through different protein-protein interaction cascades. Governs early-to-late endosomal to lysosomal maturation. Controls endocytic cargo sorting towards the late endosome facilitating its eventual endolysosomal-mediated degradation. Together with Rab2 involved in promoting fusion of autophagosomes and endosomes with lysosomes probably through recruitment of the HOPS tethering complex. Involved in biosynthetic transport to lysosomes. Involved in establishing morphogen concentration gradients, for example of the TGF-beta homolog dpp/decapentaplegic, during pattern formation and organogenesis. Together with the Mon1-Ccz1 complex, required for autolysosome formation in fat cells and autophagic degradation during starvation-induced basal and developmental autophagy. Together with Mon1, regulates levels of postsynaptic glutamate receptor GluRIIA in the neuromuscular junction (NMJ) presynapse. Required for autophagocytosis-dependent remodeling of myofibrils and transverse-tubules (T-tubules) during metamorphosis. Involved in intracellular trafficking of the carbohydrate transporter Tret1 in glial cells of the blood brain barrier, influencing its subcellular localization and protein levels. This Drosophila melanogaster (Fruit fly) protein is Ras-related protein Rab7.